The primary structure comprises 346 residues: Free fatty acid receptor 3 (346 aa).

Over 1–19 (MDTGPDQSYFSGNHWFVFS) the chain is Extracellular. The chain crosses the membrane as a helical span at residues 20 to 40 (VYLLTFLVGLPLNLLALVVFV). At 41–47 (GKLQRRP) the chain is on the cytoplasmic side. A helical transmembrane segment spans residues 48-68 (VAVDVLLLNLTASDLLLLLFL). The Extracellular portion of the chain corresponds to 69–88 (PFRMVEAANGMHWPLPFILC). Residues C88 and C169 are joined by a disulfide bond. Residues 89–111 (PLSGFIFFTTIYLTALFLAAVSI) traverse the membrane as a helical segment. Residues 112-132 (ERFLSVAHPLWYKTRPRLGQA) are Cytoplasmic-facing. The helical transmembrane segment at 133-153 (GLVSVACWLLASAHCSVVYVI) threads the bilayer. The Extracellular segment spans residues 154-178 (EFSGDISHSQGTNGTCYLEFRKDQL). A glycan (N-linked (GlcNAc...) asparagine) is linked at N166. Residues 179–199 (AILLPVRLEMAVVLFVVPLII) traverse the membrane as a helical segment. The Cytoplasmic segment spans residues 200–222 (TSYCYSRLVWILGRGGSHRRQRR). The helical transmembrane segment at 223–243 (VAGLLAATLLNFLVCFGPYNV) threads the bilayer. Topologically, residues 244–258 (SHVVGYICGESPAWR) are extracellular. Residues 259 to 279 (IYVTLLSTLNSCVDPFVYYFS) form a helical membrane-spanning segment. Topologically, residues 280 to 346 (SSGFQADFHE…TGGQVACAES (67 aa)) are cytoplasmic. Over residues 307–330 (MELKEQKGGEEQRADRPAERKTSE) the composition is skewed to basic and acidic residues. The tract at residues 307–346 (MELKEQKGGEEQRADRPAERKTSEHSQGCGTGGQVACAES) is disordered.

The protein belongs to the G-protein coupled receptor 1 family. In terms of tissue distribution, highest level in adipose tissue, and lower expression across all tissues tested. Expressed in sympathetic ganglia.

It is found in the cell membrane. Its function is as follows. G protein-coupled receptor that is activated by a major product of dietary fiber digestion, the short chain fatty acids (SCFAs), and that plays a role in the regulation of whole-body energy homeostasis and in intestinal immunity. In omnivorous mammals, the short chain fatty acids acetate, propionate and butyrate are produced primarily by the gut microbiome that metabolizes dietary fibers. SCFAs serve as a source of energy but also act as signaling molecules. That G protein-coupled receptor is probably coupled to the pertussis toxin-sensitive, G(i/o)-alpha family of G proteins. Its activation results in the formation of inositol 1,4,5-trisphosphate, the mobilization of intracellular calcium, the phosphorylation of the MAPK3/ERK1 and MAPK1/ERK2 kinases and the inhibition of intracellular cAMP accumulation. Activated by SCFAs and by beta-hydroxybutyrate, a ketone body produced by the liver upon starvation, it inhibits N-type calcium channels and modulates the activity of sympathetic neurons through a signaling cascade involving the beta and gamma subunits of its coupled G protein, phospholipase C and MAP kinases. Thereby, it may regulate energy expenditure through the control of the sympathetic nervous system that controls for instance heart rate. Upon activation by SCFAs accumulating in the intestine, it may also signal to the brain via neural circuits which in turn would regulate intestinal gluconeogenesis. May also control the production of hormones involved in whole-body energy homeostasis. May for instance, regulate blood pressure through renin secretion. May also regulate secretion of the PYY peptide by enteroendocrine cells and control gut motility, intestinal transit rate, and the harvesting of energy from SCFAs produced by gut microbiota. May also indirectly regulate the production of LEP/Leptin, a hormone acting on the CNS to inhibit food intake, in response to the presence of short-chain fatty acids in the intestine. Finally, may also play a role in glucose homeostasis. Besides its role in energy homeostasis, may play a role in intestinal immunity. May mediate the activation of the inflammatory and immune response by SCFAs in the gut, regulating the rapid production of chemokines and cytokines by intestinal epithelial cells. Among SCFAs, the fatty acids containing less than 6 carbons, the most potent activators are probably propionate, butyrate and pentanoate while acetate is a poor activator. The protein is Free fatty acid receptor 3 (FFAR3) of Homo sapiens (Human).